Reading from the N-terminus, the 269-residue chain is 2-keto-4-pentenoate hydratase (269 aa).

This sequence belongs to the hydratase/decarboxylase family. MhpD subfamily. It depends on a divalent metal cation as a cofactor.

It catalyses the reaction (S)-4-hydroxy-2-oxopentanoate = (2Z)-2-hydroxypenta-2,4-dienoate + H2O. Its pathway is aromatic compound metabolism; 3-phenylpropanoate degradation. Its function is as follows. Catalyzes the conversion of 2-hydroxypentadienoic acid (enolic form of 2-oxopent-4-enoate) to 4-hydroxy-2-ketopentanoic acid. The protein is 2-keto-4-pentenoate hydratase of Paraburkholderia xenovorans (strain LB400).